The primary structure comprises 156 residues: Transcription elongation factor GreA (156 aa).

The stretch at 2–78 forms a coiled coil; the sequence is AKEIILTQEG…MISKAKLIED (77 aa).

Belongs to the GreA/GreB family.

Necessary for efficient RNA polymerase transcription elongation past template-encoded arresting sites. The arresting sites in DNA have the property of trapping a certain fraction of elongating RNA polymerases that pass through, resulting in locked ternary complexes. Cleavage of the nascent transcript by cleavage factors such as GreA or GreB allows the resumption of elongation from the new 3'terminus. GreA releases sequences of 2 to 3 nucleotides. The sequence is that of Transcription elongation factor GreA from Mesoplasma florum (strain ATCC 33453 / NBRC 100688 / NCTC 11704 / L1) (Acholeplasma florum).